The following is a 210-amino-acid chain: Glutathione S-transferase mdpJ (210 aa).

One can recognise a GST N-terminal domain in the interval 2–83 (SFGTLYTHNP…YCNDERSSLR (82 aa)). Residues 77-200 (DERSSLRILQ…VAGGVPDLGL (124 aa)) enclose the GST C-terminal domain.

The protein belongs to the GST superfamily.

It participates in secondary metabolite biosynthesis. Functionally, glutathione S-transferase; part of the gene cluster that mediates the biosynthesis of monodictyphenone, a prenyl xanthone derivative. The pathway begins with the synthesis of atrochrysone thioester by the polyketide synthase (PKS) mdpG. The atrochrysone carboxyl ACP thioesterase mdpF then breaks the thioester bond and releases the atrochrysone carboxylic acid from mdpG. The atrochrysone carboxylic acid is then converted to atrochrysone which is further transformed into emodin anthrone. The next step is performed by the anthrone oxygenase mdpH that catalyzes the oxidation of emodinanthrone to emodin. Emodin is further modified to yield monodictyphenone via several steps involving mdpB, mdpC mdpJ, mdpK and mdpL. These enzymes with xptA, xptB and xptC are also proposed to be involved in the synthesis of shamixanthone from emodin. Especially, direct reduction of emodin by the short chain dehydrogenase mdpC followed by dehydration catalyzed by the scytalone dehydratase-like protein mdpB gives loss of oxygen and formation of chrysophanol intermediate in two simple steps. This chain is Glutathione S-transferase mdpJ, found in Emericella nidulans (strain FGSC A4 / ATCC 38163 / CBS 112.46 / NRRL 194 / M139) (Aspergillus nidulans).